Consider the following 953-residue polypeptide: Isoleucine--tRNA ligase (953 aa).

Positions 58–68 (PYANGSIHIGH) match the 'HIGH' region motif. Glu577 serves as a coordination point for L-isoleucyl-5'-AMP. The 'KMSKS' region signature appears at 618–622 (KMSKS). Lys621 lines the ATP pocket. 4 residues coordinate Zn(2+): Cys916, Cys919, Cys936, and Cys939.

Belongs to the class-I aminoacyl-tRNA synthetase family. IleS type 1 subfamily. Monomer. Requires Zn(2+) as cofactor.

It localises to the cytoplasm. The enzyme catalyses tRNA(Ile) + L-isoleucine + ATP = L-isoleucyl-tRNA(Ile) + AMP + diphosphate. Catalyzes the attachment of isoleucine to tRNA(Ile). As IleRS can inadvertently accommodate and process structurally similar amino acids such as valine, to avoid such errors it has two additional distinct tRNA(Ile)-dependent editing activities. One activity is designated as 'pretransfer' editing and involves the hydrolysis of activated Val-AMP. The other activity is designated 'posttransfer' editing and involves deacylation of mischarged Val-tRNA(Ile). In Aeromonas hydrophila subsp. hydrophila (strain ATCC 7966 / DSM 30187 / BCRC 13018 / CCUG 14551 / JCM 1027 / KCTC 2358 / NCIMB 9240 / NCTC 8049), this protein is Isoleucine--tRNA ligase.